A 673-amino-acid chain; its full sequence is Probable potassium transport system protein Kup 1 (673 aa).

13 helical membrane passes run 14 to 34, 58 to 78, 101 to 121, 147 to 167, 175 to 195, 196 to 216, 220 to 240, 252 to 272, 294 to 314, 345 to 365, 374 to 394, 403 to 423, and 427 to 447; these read GAGF…SPLY, LSLI…WIAL, WLII…ALTP, LPIV…QRFG, FGPV…INLF, GDFS…LLSP, AGIF…ALYS, VSWP…AAWL, LIIF…QALI, LYIP…VVYF, AYGL…TVYL, VFVV…FAAS, and FLHG…VMAI.

Belongs to the HAK/KUP transporter (TC 2.A.72) family.

Its subcellular location is the cell membrane. It catalyses the reaction K(+)(in) + H(+)(in) = K(+)(out) + H(+)(out). In terms of biological role, transport of potassium into the cell. Likely operates as a K(+):H(+) symporter. The polypeptide is Probable potassium transport system protein Kup 1 (Lactococcus lactis subsp. cremoris (strain SK11)).